Reading from the N-terminus, the 474-residue chain is Aspartic-type endopeptidase ctsD (474 aa).

Positions 1–19 (MHLLQCLLSTISLASTVTA) are cleaved as a signal peptide. One can recognise a Peptidase A1 domain in the interval 106-413 (YFATVRVGSQ…DYDNHRIGFA (308 aa)). Aspartate 124 is a catalytic residue. Asparagine 189, asparagine 197, asparagine 275, and asparagine 301 each carry an N-linked (GlcNAc...) asparagine glycan. Aspartate 307 is a catalytic residue. Asparagine 338, asparagine 344, and asparagine 414 each carry an N-linked (GlcNAc...) asparagine glycan. The GPI-anchor amidated serine moiety is linked to residue serine 452. The propeptide at 453 to 474 (ASIVSRFVHWPFIFALLCMVLV) is removed in mature form.

This sequence belongs to the peptidase A1 family.

The protein resides in the cell membrane. Functionally, secreted aspartic-type endopeptidase which is secreted and contributes to virulence. This is Aspartic-type endopeptidase ctsD (ctsD) from Aspergillus fumigatus (strain ATCC MYA-4609 / CBS 101355 / FGSC A1100 / Af293) (Neosartorya fumigata).